We begin with the raw amino-acid sequence, 862 residues long: MDLPKAYDPKSVEPKWAEKWAKNPFVANPKSGKPPFVIFMPPPNVTGSLHMGHALDNSLQDALIRYKRMRGFEAVWLPGTDHAGIATQVVVERLLLKEGKTRHDLGREKFLERVWQWKEESGGTILKQLKRLGASADWSREAFTMDEKRSRAVRYAFSRYYHEGLAYRAPRLVNWCPRCETTLSDLEVETEPTPGKLYTLRYEVEGGGFIEIATVRPETVFADQAIAVHPEDERYRHLLGKRARIPLTEVWIPILADPAVEKDFGTGALKVTPAHDPLDYEIGERHGLKPVSVINLEGRMEGERVPEALRGLDRFEARRKAVELFREAGHLVKEEDYTIALATCSRCGTPIEYAIFPQWWLRMRPLAEEVLKGLRRGDIAFVPERWKKVNMDWLENVKDWNISRQLWWGHQIPAWYCEDCQAVNVPRPERYLEDPTSCEACGSPRLKRDEDVFDTWFSSALWPLSTLGWPEETEDLKAFYPGDVLVTGYDILFLWVSRMEVSGYHFMGERPFKTVLLHGLVLDEKGQKMSKSKGNVIDPLEMVERYGADALRFALIYLATGGQDIRLDLRWLEMARNFANKLYNAARFVLLSREGFQAKEDTPTLADRFMRSRLSRGVEEITALYEALDLAQAAREVYELVWSEFCDWYLEAAKPALKAGNAHTLRTLEEVLAVLLKLLHPMMPFLTSELYQALTGKEELALEAWPEPGGRDEEAERAFEALKQAVTAVRALKAEAGLPPAQEVRVYLEGETAPVEENLEVFRFLSRADLLPERPAKALVKAMPRVTARMPLEGLLDVEEWRRRQEKRLKELLALAERSQRKLASPGFREKAPKEVVEAEEARLKENLEQAERIREALSQIG.

The 'HIGH' region signature appears at 44–53 (NVTGSLHMGH). Residues Cys-176, Cys-179, Cys-344, Cys-347, Cys-417, Cys-420, Cys-438, and Cys-441 each coordinate Zn(2+). The 'KMSKS' region signature appears at 528–532 (KMSKS). Lys-531 lines the ATP pocket. A coiled-coil region spans residues 802–862 (RRRQEKRLKE…RIREALSQIG (61 aa)).

The protein belongs to the class-I aminoacyl-tRNA synthetase family. ValS type 1 subfamily. In terms of assembly, monomer. Zn(2+) serves as cofactor.

Its subcellular location is the cytoplasm. It catalyses the reaction tRNA(Val) + L-valine + ATP = L-valyl-tRNA(Val) + AMP + diphosphate. Functionally, catalyzes the attachment of valine to tRNA(Val). As ValRS can inadvertently accommodate and process structurally similar amino acids such as threonine, to avoid such errors, it has a 'posttransfer' editing activity that hydrolyzes mischarged Thr-tRNA(Val) in a tRNA-dependent manner. The chain is Valine--tRNA ligase from Thermus thermophilus (strain ATCC 27634 / DSM 579 / HB8).